Here is a 199-residue protein sequence, read N- to C-terminus: IMP cyclohydrolase (199 aa).

This sequence belongs to the archaeal IMP cyclohydrolase family.

The catalysed reaction is IMP + H2O = 5-formamido-1-(5-phospho-D-ribosyl)imidazole-4-carboxamide. The protein operates within purine metabolism; IMP biosynthesis via de novo pathway; IMP from 5-formamido-1-(5-phospho-D-ribosyl)imidazole-4-carboxamide: step 1/1. Catalyzes the cyclization of 5-formylamidoimidazole-4-carboxamide ribonucleotide to IMP. This Methanothrix thermoacetophila (strain DSM 6194 / JCM 14653 / NBRC 101360 / PT) (Methanosaeta thermophila) protein is IMP cyclohydrolase.